Consider the following 90-residue polypeptide: RNA-binding protein Hfq (90 aa).

Residues 9–69 (DRFLNHLRVN…ISTIIPSSYV (61 aa)) enclose the Sm domain.

Belongs to the Hfq family. As to quaternary structure, homohexamer.

Functionally, RNA chaperone that binds small regulatory RNA (sRNAs) and mRNAs to facilitate mRNA translational regulation in response to envelope stress, environmental stress and changes in metabolite concentrations. Also binds with high specificity to tRNAs. The protein is RNA-binding protein Hfq of Thermotoga petrophila (strain ATCC BAA-488 / DSM 13995 / JCM 10881 / RKU-1).